Consider the following 288-residue polypeptide: Serpentine receptor class gamma-1 (288 aa).

The next 7 membrane-spanning stretches (helical) occupy residues 25–45, 59–79, 118–138, 148–168, 197–217, 238–258, and 268–288; these read LFLQ…VIYI, FYTI…FSIF, FQIL…LWPL, LKSI…TIAI, FSIL…TMLI, VYLS…FLVL, and ILHG…TYVM.

This sequence belongs to the nematode receptor-like protein srg family.

It is found in the membrane. This chain is Serpentine receptor class gamma-1 (srg-1), found in Caenorhabditis elegans.